The chain runs to 77 residues: Apelin (77 aa).

Positions 1 to 22 (MNLRRCVQALLLLWLCLSAVCG) are cleaved as a signal peptide. A propeptide spanning residues 23 to 41 (GPLLQTSDGKEMEEGTIRY) is cleaved from the precursor. The tract at residues 43-77 (VQPRGPRSGPGPWQGGRRKFRRQRPRLSHKGPMPF) is disordered. The span at 58 to 71 (GRRKFRRQRPRLSH) shows a compositional bias: basic residues. Pyrrolidone carboxylic acid is present on Gln65.

This sequence belongs to the apelin family. In terms of processing, at least 5 active peptides may be produced by proteolytic processing of the peptide precursor.

The protein resides in the secreted. The protein localises to the extracellular space. In terms of biological role, peptide hormone that functions as endogenous ligand for the G-protein-coupled apelin receptor (APLNR/APJ), that plays a role in cadiovascular homeostasis. Functions as a balanced agonist activating both G(i) protein pathway and beta-arrestin pathway of APLNR. Downstream G proteins activation, apelin can inhibit cAMP production and activate key intracellular effectors such as ERKs. On the other hand, APLNR activation induces beta-arrestin recruitment to the membrane leading to desensitization and internalization of the receptor. Apelin blunts cardiac hypertrophic induction from APLNR on response to pathological stimuli, but also induces myocardial hypertrophy under normal conditions. Apelin-36 dissociates more hardly than (pyroglu)apelin-13 from APLNR. Involved in the regulation of cardiac precursor cell movements during gastrulation and heart morphogenesis. Has an inhibitory effect on cytokine production in response to T-cell receptor/CD3 cross-linking; the oral intake of apelin in the colostrum and the milk might therefore modulate immune responses in neonates. Plays a role in early coronary blood vessels formation. Mediates myocardial contractility in an ERK1/2-dependent manner. May also have a role in the central control of body fluid homeostasis by influencing vasopressin release and drinking behavior. This Bos taurus (Bovine) protein is Apelin (APLN).